Here is a 277-residue protein sequence, read N- to C-terminus: Sulfur carrier protein FdhD (277 aa).

Catalysis depends on Cys-123, which acts as the Cysteine persulfide intermediate.

This sequence belongs to the FdhD family.

The protein resides in the cytoplasm. Its function is as follows. Required for formate dehydrogenase (FDH) activity. Acts as a sulfur carrier protein that transfers sulfur from IscS to the molybdenum cofactor prior to its insertion into FDH. The polypeptide is Sulfur carrier protein FdhD (Pectobacterium atrosepticum (strain SCRI 1043 / ATCC BAA-672) (Erwinia carotovora subsp. atroseptica)).